The primary structure comprises 554 residues: Protein translocase subunit SecD (554 aa).

Transmembrane regions (helical) follow at residues 10–30, 392–412, 414–434, 435–455, 491–511, and 516–536; these read LVILGLCLAALITAAPNMFYA, AGMVASVIGFVAVVAYMIASY, LFGFFSSVALFINIAFIFAVM, GAIGGTMTLPGIAGIVLTIGT, AIIDANVTSFLSSAILFVLGA, and GFAVTTMIGIAASIFTAIWVV.

Belongs to the SecD/SecF family. SecD subfamily. As to quaternary structure, forms a complex with SecF. Part of the essential Sec protein translocation apparatus which comprises SecA, SecYEG and auxiliary proteins SecDF-YajC and YidC.

Its subcellular location is the cell inner membrane. Part of the Sec protein translocase complex. Interacts with the SecYEG preprotein conducting channel. SecDF uses the proton motive force (PMF) to complete protein translocation after the ATP-dependent function of SecA. This is Protein translocase subunit SecD from Rhodobacter capsulatus (strain ATCC BAA-309 / NBRC 16581 / SB1003).